Here is a 179-residue protein sequence, read N- to C-terminus: ATP-dependent protease subunit HslV (179 aa).

Thr-7 is a catalytic residue. Na(+) contacts are provided by Gly-162, Cys-165, and Thr-168.

It belongs to the peptidase T1B family. HslV subfamily. A double ring-shaped homohexamer of HslV is capped on each side by a ring-shaped HslU homohexamer. The assembly of the HslU/HslV complex is dependent on binding of ATP.

The protein resides in the cytoplasm. It carries out the reaction ATP-dependent cleavage of peptide bonds with broad specificity.. Its activity is regulated as follows. Allosterically activated by HslU binding. In terms of biological role, protease subunit of a proteasome-like degradation complex believed to be a general protein degrading machinery. The sequence is that of ATP-dependent protease subunit HslV from Bordetella pertussis (strain Tohama I / ATCC BAA-589 / NCTC 13251).